The chain runs to 155 residues: Rhombotin-1 (155 aa).

LIM zinc-binding domains lie at 21 to 83 and 85 to 147; these read KGCA…LFGT and GNCA…GQLN.

It localises to the nucleus. May be involved in gene regulation within neural lineage cells potentially by direct DNA binding or by binding to other transcription factors. The polypeptide is Rhombotin-1 (Danio rerio (Zebrafish)).